Consider the following 96-residue polypeptide: Co-chaperonin GroES (96 aa).

Belongs to the GroES chaperonin family. Heptamer of 7 subunits arranged in a ring. Interacts with the chaperonin GroEL.

Its subcellular location is the cytoplasm. Functionally, together with the chaperonin GroEL, plays an essential role in assisting protein folding. The GroEL-GroES system forms a nano-cage that allows encapsulation of the non-native substrate proteins and provides a physical environment optimized to promote and accelerate protein folding. GroES binds to the apical surface of the GroEL ring, thereby capping the opening of the GroEL channel. The chain is Co-chaperonin GroES from Hydrogenobaculum sp. (strain Y04AAS1).